Consider the following 510-residue polypeptide: Cytochrome P450 monooxygenase macH (510 aa).

A helical membrane pass occupies residues 7–29 (LPVSLWLIAAGTFAVYHAIRAVY). Cysteine 454 contributes to the heme binding site.

It belongs to the cytochrome P450 family. The cofactor is heme.

The protein localises to the membrane. Its pathway is secondary metabolite biosynthesis; terpenoid biosynthesis. In terms of biological role, cytochrome P450 monooxygenase; part of the gene cluster that mediates the biosynthesis of macrophorins, isoprenoid epoxycyclohexenones containing cyclized drimane moieties. The first step of the pathway is the synthesis of 6-methylsalicylic acid (6-MSA) by the polyketide synthase macA. 6-MSA is then converted to m-cresol by the decarboxylase macB. The cytochrome P450 monooxygenase macC then catalyzes the oxidation of m-cresol to toluquinol. Epoxidation of toluquinol is then performed by the short chain dehydrogenase macD, with the help of macE, and a further prenylation by macG leads to 7-deacetoxyyanuthone A. The next step is the hydroxylation of C-22 of 7-deacetoxyyanuthone A by the cytochrome P450 monooxygenase macH to yield 22-deacetylyanuthone A. O-Mevalon transferase macI then attaches mevalon to the hydroxyl group of 22-deacetylyanuthone A to produce yanuthone E. The terpene cyclase macJ catalyzes the cyclization of 22-deacetylyanuthone A to macrophorin A. MacJ is also able to catalyze cyclization of yanuthone E and 7-deacetoxyyanuthone A to their corresponding macrophorins. The macJ products can be further modified by macH and macJ, as well as by the FAD-dependent monooxygenase macF, to produce additional macrophorins, including 4'-oxomacrophorin A, 4'-oxomacrophorin D and 4'-oxomacrophorin E. This is Cytochrome P450 monooxygenase macH from Penicillium terrestre.